The sequence spans 139 residues: uncharacterized protein (139 aa).

One can recognise a Globin domain in the interval 1–133 (MLSEETIRVI…LAKTLITLEK (133 aa)).

The protein belongs to the globin family.

This is an uncharacterized protein from Aquifex aeolicus (strain VF5).